Consider the following 619-residue polypeptide: Chaperone protein HscA homolog (619 aa).

The protein belongs to the heat shock protein 70 family.

Its function is as follows. Chaperone involved in the maturation of iron-sulfur cluster-containing proteins. Has a low intrinsic ATPase activity which is markedly stimulated by HscB. This is Chaperone protein HscA homolog from Methylococcus capsulatus (strain ATCC 33009 / NCIMB 11132 / Bath).